The sequence spans 481 residues: Hyaluronidase-4 (481 aa).

Residues 1-8 are Cytoplasmic-facing; the sequence is MKVLSEGQ. A helical transmembrane segment spans residues 9-29; it reads LKLCVVQPVHLTSWLLIFFIL. Over 30–453 the chain is Extracellular; that stretch reads KSISCLKPAR…ADCREIKTAD (424 aa). Disulfide bonds link Cys-59–Cys-351, Cys-223–Cys-237, Cys-376–Cys-387, Cys-381–Cys-435, and Cys-437–Cys-446. 2 N-linked (GlcNAc...) asparagine glycosylation sites follow: Asn-86 and Asn-115. The Proton donor role is filled by Glu-147. N-linked (GlcNAc...) (complex) asparagine glycosylation occurs at Asn-177. Residue Asn-343 is glycosylated (N-linked (GlcNAc...) asparagine). Residues 454–474 traverse the membrane as a helical segment; that stretch reads GCSGVSPSPGSLMTLCLLLLA. Over 475-481 the chain is Cytoplasmic; sequence SYRSIQL.

This sequence belongs to the glycosyl hydrolase 56 family. As to expression, detected in placenta and skeletal muscle.

It localises to the membrane. The enzyme catalyses Random hydrolysis of (1-&gt;4)-linkages between N-acetyl-beta-D-glucosamine and D-glucuronate residues in hyaluronate.. Its function is as follows. Endo-hyaluronidase that degrades hyaluronan to smaller oligosaccharide fragments. Also has chondroitin sulfate hydrolase activity, The best substrate being the galactosaminidic linkage in the sequence of a trisulfated tetrasaccharide. The chain is Hyaluronidase-4 (HYAL4) from Homo sapiens (Human).